The chain runs to 522 residues: FAD-dependent monooxygenase fsr3 (522 aa).

The disordered stretch occupies residues 1 to 27 (MKNTQTNGTHPIIDKKPNGTLNGDHQE). Arg-164 provides a ligand contact to FAD. The active site involves Arg-245. Positions 369 and 382 each coordinate FAD.

The protein belongs to the paxM FAD-dependent monooxygenase family. Requires FAD as cofactor.

It functions in the pathway polyketide biosynthesis. In terms of biological role, FAD-dependent monooxygenase; part of the gene cluster that mediates the biosynthesis of fusarubins, highly pigmented naphthoquinones responsible for the coloration of the fruiting bodies. The non-reducing polyketide synthase FSR1 is responsible for the condensation of seven acetyl-CoA units to yield a haptaketide. After rings A and B are formed by aldol-type cyclization, the PKS-derived product is released as 6-O-demethylfusarubinaldehyde. Then, two hydroxyl groups at C-5 and C-10 are incorporated by FSR3, and simultaneously hydroxyl groups at C-6 and C-8 are methylated by FSR2. The aldehyde is, on the one hand, reduced by FSR3 to 8-O-methylfusarubin alcohol, which equilibrates mainly with 8-O-methylfusarubin and only small amounts of 8-O-methylnectriafurone. On the other hand, the aldehyde can be oxidized to form 8-O-methylfusarubinic acid, a reaction driven by FSR3 equilibrating with 8-O-methylfusarubinlactone, finally resulting in 8-O-methylanhydrofusarubinlactol after a further reduction step and loss of water. 8-O-Methylfusarubinic acid can also undergo decarboxylation, resulting in 8-O-methyl-13-hydroxynorjavanicin after another hydroxylation step at C-13. Both steps are most likely also accomplished by FSR3. No enzymatic function has been determined so far for either FSR4 and FSR5. Their deletion does not alter the product spectrum, but the possibility that they catalyze specific enzymatic steps during perithecium development cannot be ruled out. FSR4 might possess a regulatory function in the biosynthesis of fusarubins. This is FAD-dependent monooxygenase fsr3 from Gibberella fujikuroi (strain CBS 195.34 / IMI 58289 / NRRL A-6831) (Bakanae and foot rot disease fungus).